Reading from the N-terminus, the 481-residue chain is Tryptophan 5-hydroxylase (481 aa).

The ACT domain occupies serine 56–asparagine 131. Residues tyrosine 272, arginine 294, and threonine 302 each contribute to the L-tryptophan site. Positions 309, 314, and 354 each coordinate Fe cation. L-tryptophan-binding residues include serine 373 and isoleucine 403.

It belongs to the biopterin-dependent aromatic amino acid hydroxylase family. Homotetramer. It depends on Fe(2+) as a cofactor.

The catalysed reaction is (6R)-L-erythro-5,6,7,8-tetrahydrobiopterin + L-tryptophan + O2 = 5-hydroxy-L-tryptophan + (4aS,6R)-4a-hydroxy-L-erythro-5,6,7,8-tetrahydrobiopterin. Its pathway is aromatic compound metabolism; serotonin biosynthesis; serotonin from L-tryptophan: step 1/2. In terms of biological role, oxidizes L-tryptophan to 5-hydroxy-l-tryptophan in the rate-determining step of serotonin biosynthesis. In Xenopus laevis (African clawed frog), this protein is Tryptophan 5-hydroxylase (tph1).